A 152-amino-acid chain; its full sequence is Ninjurin-1 (152 aa).

Met1 carries the post-translational modification N-acetylmethionine. Over residues 1 to 10 (MESGTEEYEL) the composition is skewed to acidic residues. The tract at residues 1–29 (MESGTEEYELNGDLRPGSPGSPDALPPRW) is disordered. The Extracellular segment spans residues 1–78 (MESGTEEYEL…EQGNDFAFFV (78 aa)). Residues Ser18 and Ser21 each carry the phosphoserine modification. The N-terminal adhesion motif stretch occupies residues 26–37 (PPRWGLRNRPIN). Residues 40–69 (HYANKKSAAESMLDIALLMANASQLKAVVE) are required to induce plasma membrane rupture. The segment at 44–55 (KKSAAESMLDIA) is helix alpha1. The helix alpha2 stretch occupies residues 58 to 74 (MANASQLKAVVEQGNDF). N-linked (GlcNAc...) asparagine glycosylation occurs at Asn60. The helical transmembrane segment at 79–103 (PLVVLISISLVLQIGVGVLLIFLVK) threads the bilayer. Over 104 to 113 (YDLNNPAKHA) the chain is Cytoplasmic. Residues 114–138 (KLDFLNNLATGLVFIIVVVNIFITA) traverse the membrane as a helical segment. Over 139–152 (FGVQKPVMDVAPRQ) the chain is Extracellular.

It belongs to the ninjurin family. As to quaternary structure, homodimer; in absence of death stimuli, forms an inactive homodimer. Homooligomer; in response to death stimuli, homooligomerizes into long, highly branched filaments and large, ring-shaped structures in the membrane. In terms of processing, cleaved by MMP9 protease to generate the Secreted ninjurin-1 form. Post-translationally, N-linked glycosylation is required for homooligomerization.

The protein localises to the cell membrane. Its subcellular location is the synaptic cell membrane. It is found in the secreted. Its activity is regulated as follows. In response to death stimuli, homooligomerizes and disrupts membrane integrity by introducing the hydrophilic faces of alpha1 and alpha2 helices into the hydrophobic membrane. Homooligomerization and ability to mediate plasma membrane rupture is inhibited by glycine; it is unclear whether glycine directly or indirectly inhibits homooligomerization. In normal conditions, NINJ1 is autoinhibited via formation of a homodimer: in the inactive homodimer, the alpha1 and alpha2 helices (residues 44-74) form a single transmembrane region without a kink, in which hydrophilic faces of alpha1 and alpha2 helices are sequestered. Its function is as follows. Effector of various programmed cell death, such as pyroptosis and necroptosis, which mediates plasma membrane rupture (cytolysis). Oligomerizes in response to death stimuli and forms ring-like structures on the plasma membrane: acts by cutting and shedding membrane disks, like a cookie cutter, leading to membrane damage and loss that cannot be repaired by the cell. Plasma membrane rupture leads to release intracellular molecules named damage-associated molecular patterns (DAMPs) that propagate the inflammatory response. Mechanistically, mediates plasma membrane rupture by introducing hydrophilic faces of 2 alpha helices into the hydrophobic membrane. Induces plasma membrane rupture downstream of Gasdermin (GSDMA, GSDMB, GSDMC, GSDMD, or GSDME) or MLKL during pyroptosis or necroptosis, respectively. Acts as an effector of PANoptosis downstream of CASP1, CASP4, CASP8 and RIPK3. Also induces plasma membrane rupture in response to cell swelling caused by osmotic stress and ferroptosis downstream of lipid peroxidation. Acts as a regulator of Toll-like receptor 4 (TLR4) signaling triggered by lipopolysaccharide (LPS) during systemic inflammation; directly binds LPS. Involved in leukocyte migration during inflammation by promoting transendothelial migration of macrophages via homotypic binding. Promotes the migration of monocytes across the brain endothelium to central nervous system inflammatory lesions. Also acts as a homophilic transmembrane adhesion molecule involved in various processes such as axonal growth, cell chemotaxis and angiogenesis. Promotes cell adhesion by mediating homophilic interactions via its extracellular N-terminal adhesion motif (N-NAM). Involved in the progression of the inflammatory stress by promoting cell-to-cell interactions between immune cells and endothelial cells. Plays a role in nerve regeneration by promoting maturation of Schwann cells. Acts as a regulator of angiogenesis. Promotes the formation of new vessels by mediating the interaction between capillary pericyte cells and endothelial cells. Also mediates vascular functions in penile tissue as well as vascular formation. Promotes osteoclasts development by enhancing the survival of prefusion osteoclasts. Also involved in striated muscle growth and differentiation. Also involved in cell senescence in a p53/TP53 manner, possibly by acting as an indirect regulator of p53/TP53 mRNA translation. Secreted form generated by cleavage, which has chemotactic activity. Acts as an anti-inflammatory mediator by promoting monocyte recruitment, thereby ameliorating atherosclerosis. The chain is Ninjurin-1 from Mus musculus (Mouse).